The following is a 103-amino-acid chain: Small ribosomal subunit protein uS17 (103 aa).

The disordered stretch occupies residues 78–103 (SHSPKADKSAGSTAPAPEAAAKEVSE).

The protein belongs to the universal ribosomal protein uS17 family. In terms of assembly, part of the 30S ribosomal subunit.

Functionally, one of the primary rRNA binding proteins, it binds specifically to the 5'-end of 16S ribosomal RNA. In Parasynechococcus marenigrum (strain WH8102), this protein is Small ribosomal subunit protein uS17.